A 1535-amino-acid chain; its full sequence is ABC multidrug transporter atrF (1535 aa).

The tract at residues 1 to 115 (MADDHRQPEA…DEQASSTDEY (115 aa)) is disordered. An N-linked (GlcNAc...) asparagine glycan is attached at asparagine 33. Positions 34 to 45 (TTSTSETDASAD) are enriched in low complexity. A compositionally biased stretch (basic and acidic residues) spans 46–76 (ADARWGERNQGDPVSRRGAMEEFEEMRREVT). A compositionally biased stretch (basic residues) spans 79 to 93 (SLHRTRSAKDARRRS). Residues asparagine 149, asparagine 274, asparagine 287, and asparagine 351 are each glycosylated (N-linked (GlcNAc...) asparagine). The ABC transporter 1 domain occupies 185 to 427 (VPALHFGKRP…FVDLGFYCPE (243 aa)). 7 helical membrane passes run 540-560 (LYTK…LFYG), 573-593 (GALF…MPAV), 618-638 (VVVD…IVYF), 646-666 (ASKF…ITSL), 680-700 (AVRF…YVIP), 703-723 (GLID…LSYS), and 791-811 (FGVV…AAEV). Residues 834 to 868 (KAQNGKGNDEEQVQNTGDNAALSRGEAKSSSSGEA) form a disordered region. One can recognise an ABC transporter 2 domain in the interval 879–1117 (FTWSNVEYTV…DVIKYFADRG (239 aa)). Asparagine 892 carries N-linked (GlcNAc...) asparagine glycosylation. Residue 915-922 (GASGAGKT) participates in ATP binding. 6 consecutive transmembrane segments (helical) span residues 1212 to 1232 (YGKL…FWML), 1246 to 1266 (IFLI…KFYI), 1295 to 1315 (IPMA…PVGF), 1320 to 1340 (SSAG…ASWG), 1342 to 1362 (WICA…FFFV), and 1384 to 1406 (WMYY…FPSV). The N-linked (GlcNAc...) asparagine glycan is linked to asparagine 1459. Helical transmembrane passes span 1477 to 1497 (CFGI…FFIY) and 1503 to 1523 (GWSF…EGVK).

This sequence belongs to the ABC transporter superfamily. ABCG family. PDR (TC 3.A.1.205) subfamily.

The protein resides in the cell membrane. The catalysed reaction is voriconazole(in) + ATP + H2O = voriconazole(out) + ADP + phosphate + H(+). Functionally, pleiotropic ABC efflux transporter involved in the basal level of azole susceptibility. Confers resistance to voriconazole. In Aspergillus flavus (strain ATCC 200026 / FGSC A1120 / IAM 13836 / NRRL 3357 / JCM 12722 / SRRC 167), this protein is ABC multidrug transporter atrF.